The primary structure comprises 1128 residues: Translation initiation factor IF-2 (1128 aa).

The disordered stretch occupies residues 57–519 (NSDKQILSIN…KETTRQRQKR (463 aa)). Positions 70–83 (NKKDNYKQNKEDKS) are enriched in basic and acidic residues. Positions 100-110 (KKQLLNKPLNK) are enriched in low complexity. A compositionally biased stretch (polar residues) spans 120-146 (QLKNPNKPNIYNSSQSQANLTNQNTKS). Over residues 147–158 (KPSEHFNKDKKT) the composition is skewed to basic and acidic residues. A compositionally biased stretch (low complexity) spans 182 to 196 (KNINNNLKSNESSKN). Residues 201–214 (GDKRELSLKPDQNR) show a composition bias toward basic and acidic residues. Composition is skewed to polar residues over residues 243-267 (KQNN…NRPG) and 386-397 (AKTNNQKQNIES). The span at 432-445 (RKDWDDSAKLEALR) shows a compositional bias: basic and acidic residues. Residues 499-519 (HKSTKQFKKKKKETTRQRQKR) show a composition bias toward basic residues. One can recognise a tr-type G domain in the interval 620-792 (KRPPVITVMG…ILLVSEVEDL (173 aa)). The interval 629–636 (GHVDHGKT) is G1. 629–636 (GHVDHGKT) contributes to the GTP binding site. The interval 654–658 (GITQH) is G2. Residues 679-682 (DTPG) form a G3 region. GTP is bound by residues 679-683 (DTPGH) and 733-736 (NKID). Residues 733–736 (NKID) form a G4 region. A G5 region spans residues 769–771 (SAI).

Belongs to the TRAFAC class translation factor GTPase superfamily. Classic translation factor GTPase family. IF-2 subfamily.

It is found in the cytoplasm. Functionally, one of the essential components for the initiation of protein synthesis. Protects formylmethionyl-tRNA from spontaneous hydrolysis and promotes its binding to the 30S ribosomal subunits. Also involved in the hydrolysis of GTP during the formation of the 70S ribosomal complex. This is Translation initiation factor IF-2 from Prochlorococcus marinus (strain MIT 9312).